Consider the following 406-residue polypeptide: Sensor histidine kinase YxjM (406 aa).

Over 1 to 13 (MNGQTPARHYYKK) the chain is Cytoplasmic. Residues 14–34 (LVPSLILILNCIQFLSHPTKA) traverse the membrane as a helical segment. At 35–36 (DP) the chain is on the extracellular side. Residues 37–57 (ILLAFVFAVYLAFIWIIPYVA) traverse the membrane as a helical segment. Position 58 (serine 58) is a topological domain, cytoplasmic. The next 2 membrane-spanning stretches (helical) occupy residues 59-79 (TAVS…FWAV) and 80-100 (SGQE…YAAF). Residue arginine 101 is a topological domain, cytoplasmic. The chain crosses the membrane as a helical span at residues 102–122 (LPSRLSLIFTACLIGGNILLL). Over 123-125 (SSQ) the chain is Extracellular. Residues 126–146 (GGSLNTIISNISIMLGLYVLF) traverse the membrane as a helical segment. Over 147 to 406 (SSMRFRREAR…TNKEQKDEQR (260 aa)) the chain is Cytoplasmic. The Histidine kinase domain occupies 209–396 (DIHDSIGHEL…KIELSLPLMT (188 aa)). Histidine 211 is subject to Phosphohistidine; by autocatalysis.

The protein resides in the cell membrane. It carries out the reaction ATP + protein L-histidine = ADP + protein N-phospho-L-histidine.. Functionally, probable member of the two-component regulatory system YxjM/YxjL. May activate YxjL by phosphorylation. This chain is Sensor histidine kinase YxjM (yxjM), found in Bacillus subtilis (strain 168).